The primary structure comprises 87 residues: Exodeoxyribonuclease 7 small subunit (87 aa).

Belongs to the XseB family. As to quaternary structure, heterooligomer composed of large and small subunits.

It is found in the cytoplasm. The enzyme catalyses Exonucleolytic cleavage in either 5'- to 3'- or 3'- to 5'-direction to yield nucleoside 5'-phosphates.. In terms of biological role, bidirectionally degrades single-stranded DNA into large acid-insoluble oligonucleotides, which are then degraded further into small acid-soluble oligonucleotides. This is Exodeoxyribonuclease 7 small subunit from Serratia proteamaculans (strain 568).